A 208-amino-acid polypeptide reads, in one-letter code: ATP-dependent Clp protease proteolytic subunit (208 aa).

Ser106 serves as the catalytic Nucleophile. His131 is a catalytic residue.

Belongs to the peptidase S14 family. In terms of assembly, fourteen ClpP subunits assemble into 2 heptameric rings which stack back to back to give a disk-like structure with a central cavity, resembling the structure of eukaryotic proteasomes.

The protein localises to the cytoplasm. It carries out the reaction Hydrolysis of proteins to small peptides in the presence of ATP and magnesium. alpha-casein is the usual test substrate. In the absence of ATP, only oligopeptides shorter than five residues are hydrolyzed (such as succinyl-Leu-Tyr-|-NHMec, and Leu-Tyr-Leu-|-Tyr-Trp, in which cleavage of the -Tyr-|-Leu- and -Tyr-|-Trp bonds also occurs).. Cleaves peptides in various proteins in a process that requires ATP hydrolysis. Has a chymotrypsin-like activity. Plays a major role in the degradation of misfolded proteins. The sequence is that of ATP-dependent Clp protease proteolytic subunit from Dinoroseobacter shibae (strain DSM 16493 / NCIMB 14021 / DFL 12).